The primary structure comprises 287 residues: ADP-dependent (S)-NAD(P)H-hydrate dehydratase (287 aa).

The region spanning 7–283 (GEDDVRKFVP…ELLPSVMKPF (277 aa)) is the YjeF C-terminal domain. (6S)-NADPHX is bound by residues A42 and H159. AMP is bound by residues 196–200 (KGPTD) and G224. D225 provides a ligand contact to (6S)-NADPHX.

Belongs to the NnrD/CARKD family. Homotetramer. Mg(2+) serves as cofactor.

The catalysed reaction is (6S)-NADHX + ADP = AMP + phosphate + NADH + H(+). The enzyme catalyses (6S)-NADPHX + ADP = AMP + phosphate + NADPH + H(+). Catalyzes the dehydration of the S-form of NAD(P)HX at the expense of ADP, which is converted to AMP. Together with NAD(P)HX epimerase, which catalyzes the epimerization of the S- and R-forms, the enzyme allows the repair of both epimers of NAD(P)HX, a damaged form of NAD(P)H that is a result of enzymatic or heat-dependent hydration. The polypeptide is ADP-dependent (S)-NAD(P)H-hydrate dehydratase (Cenarchaeum symbiosum (strain A)).